We begin with the raw amino-acid sequence, 247 residues long: L-cystine import ATP-binding protein TcyC (247 aa).

One can recognise an ABC transporter domain in the interval 2–240 (LTVKGLNKSF…PKEERTQRFL (239 aa)). ATP is bound at residue 34-41 (GPSGSGKT).

Belongs to the ABC transporter superfamily. L-cystine importer (TC 3.A.1.3.14) family. As to quaternary structure, the complex is composed of two ATP-binding proteins (TcyC), two transmembrane proteins (TcyB) and a solute-binding protein (TcyA).

Its subcellular location is the cell membrane. Functionally, part of the ABC transporter complex TcyABC involved in L-cystine import. Responsible for energy coupling to the transport system. The chain is L-cystine import ATP-binding protein TcyC (tcyC) from Bacillus subtilis (strain 168).